Reading from the N-terminus, the 204-residue chain is Cytochrome c biogenesis ATP-binding export protein CcmA (204 aa).

The ABC transporter domain maps to Ile-2–Leu-204. Gly-34–Thr-41 contacts ATP.

It belongs to the ABC transporter superfamily. CcmA exporter (TC 3.A.1.107) family. The complex is composed of two ATP-binding proteins (CcmA) and two transmembrane proteins (CcmB).

The protein resides in the cell inner membrane. The enzyme catalyses heme b(in) + ATP + H2O = heme b(out) + ADP + phosphate + H(+). Part of the ABC transporter complex CcmAB involved in the biogenesis of c-type cytochromes; once thought to export heme, this seems not to be the case, but its exact role is uncertain. Responsible for energy coupling to the transport system. This is Cytochrome c biogenesis ATP-binding export protein CcmA from Ruegeria sp. (strain TM1040) (Silicibacter sp.).